The primary structure comprises 607 residues: Serine/threonine-protein kinase sid2 (607 aa).

Phosphoserine is present on residues S56, S60, S65, and S86. The segment covering D93–D108 has biased composition (basic and acidic residues). The segment at D93–E118 is disordered. Residues R109–E118 are compositionally biased toward polar residues. In terms of domain architecture, Protein kinase spans F208–F508. ATP is bound by residues V214 to V222 and K237. Y219 carries the phosphotyrosine modification. Catalysis depends on D331, which acts as the Proton acceptor. The residue at position 402 (S402) is a Phosphoserine. Positions S509 to S589 constitute an AGC-kinase C-terminal domain. Residues H586–L607 are disordered. The span at S589–L607 shows a compositional bias: low complexity.

The protein belongs to the protein kinase superfamily. Ser/Thr protein kinase family. In terms of assembly, interacts with mob1 and cdc11.

The protein localises to the cytoplasm. Its subcellular location is the cytoskeleton. It localises to the microtubule organizing center. The protein resides in the spindle pole body. The enzyme catalyses L-seryl-[protein] + ATP = O-phospho-L-seryl-[protein] + ADP + H(+). It catalyses the reaction L-threonyl-[protein] + ATP = O-phospho-L-threonyl-[protein] + ADP + H(+). Its function is as follows. Part of a signaling pathway. Required for initiation of medial ring constriction and septation. The sequence is that of Serine/threonine-protein kinase sid2 (sid2) from Schizosaccharomyces pombe (strain 972 / ATCC 24843) (Fission yeast).